Reading from the N-terminus, the 815-residue chain is Sodium/hydrogen exchanger 1 (815 aa).

Residues 1–98 (MVLRSGICGL…FPVLGIDYTH (98 aa)) are Extracellular-facing. Thr-42 is a glycosylation site (O-linked (GalNAc...) threonine). Residues 42–79 (TASTIRSSEPPRERSIGDVTTAPPEVTPESRPVNHSVT) are disordered. Residue Ser-56 is glycosylated (O-linked (GalNAc...) serine). O-linked (GalNAc...) threonine glycosylation is found at Thr-61, Thr-62, and Thr-68. The N-linked (GlcNAc...) asparagine glycan is linked to Asn-75. Residues 99–121 (VRTPFEISLWILLACLMKIGFHV) form a helical membrane-spanning segment. The Cytoplasmic portion of the chain corresponds to 122–130 (IPTISSIVP). Residues 131–148 (ESCLLIVVGLLVGGLIKG) form a helical membrane-spanning segment. Residues 149–158 (VGETPPFLQS) lie on the Extracellular side of the membrane. The helical transmembrane segment at 159 to 176 (DVFFLFLLPPIILDAGYF) threads the bilayer. Residues 177–186 (LPLRQFTENL) are Cytoplasmic-facing. The helical transmembrane segment at 187–215 (GTILIFAVVGTLWNAFFLGGLMYAVCLVG) threads the bilayer. Residues 216–222 (GEQINNI) are Extracellular-facing. Residues 223–249 (GLLDNLLFGSIISAVDPVAVLAVFEEI) traverse the membrane as a helical segment. At 250 to 252 (HIN) the chain is on the cytoplasmic side. Residues 253–283 (ELLHILVFGESLLNDAVTVVLYHLFEEFANY) form a helical membrane-spanning segment. Topologically, residues 284 to 287 (EHVG) are extracellular. A helical membrane pass occupies residues 288–322 (IVDIFLGFLSFFVVALGGVLVGVVYGVIAAFTSRF). The Cytoplasmic segment spans residues 323–328 (TSHIRV). The chain crosses the membrane as a helical span at residues 329–341 (IEPLFVFLYSYMA). The Extracellular segment spans residues 342 to 350 (YLSAELFHL). The chain crosses the membrane as a helical span at residues 351–371 (SGIMALIASGVVMRPYVEANI). The Cytoplasmic portion of the chain corresponds to 372-373 (SH). The helical transmembrane segment at 374–404 (KSHTTIKYFLKMWSSVSETLIFIFLGVSTVA) threads the bilayer. Over 405–410 (GSHHWN) the chain is Extracellular. Residues 411–438 (WTFVISTLLFCLIARVLGVLGLTWFINK) traverse the membrane as a helical segment. Residues 439-444 (FRIVKL) lie on the Cytoplasmic side of the membrane. A helical membrane pass occupies residues 445–469 (TPKDQFIIAYGGLRGAIAFSLGYLL). Topologically, residues 470 to 475 (DKKHFP) are extracellular. The helical transmembrane segment at 476-505 (MCDLFLTAIITVIFFTVFVQGMTIRPLVDL) threads the bilayer. An interaction with TESC region spans residues 503 to 545 (VDLLAVKKKQETKRSINEEIHTQFLDHLLTGIEDICGHYGHHH). At 506–815 (LAVKKKQETK…EGEPFFPKGQ (310 aa)) the chain is on the cytoplasmic side. The interval 509 to 516 (KKKQETKR) is PI(4,5)P2-binding region. The tract at residues 515–545 (KRSINEEIHTQFLDHLLTGIEDICGHYGHHH) is interaction with CHP2. The tract at residues 540–545 (HYGHHH) is confers pH-dependent PI(4,5)P2 binding. A PI(4,5)P2-binding region region spans residues 552–560 (RFNKKYVKK). Residues Ser-599 and Ser-602 each carry the phosphoserine modification. Phosphothreonine is present on Thr-603. Phosphoserine occurs at positions 605 and 648. The interaction with TESC stretch occupies residues 633-815 (KILRNNLQKT…EGEPFFPKGQ (183 aa)). Residues 633–815 (KILRNNLQKT…EGEPFFPKGQ (183 aa)) form an interaction with CALM1 region. Residues 684–687 (LTVP) form an interaction with PPP3CA region. 3 positions are modified to phosphoserine: Ser-693, Ser-697, and Ser-703. Residues 715 to 720 (PVITID) are interaction with PPP3CA. Residues Ser-723, Ser-726, and Ser-729 each carry the phosphoserine modification. The tract at residues 744–815 (LSRDPAKVAE…EGEPFFPKGQ (72 aa)) is disordered. Thr-779 carries the phosphothreonine modification. Over residues 782–791 (PSDSPSSQRI) the composition is skewed to polar residues. A phosphoserine mark is found at Ser-785, Ser-787, and Ser-796.

The protein belongs to the monovalent cation:proton antiporter 1 (CPA1) transporter (TC 2.A.36) family. Homodimer; dimerization is crucial for its function. Oligomer. Interacts with CALM1 in a calcium-dependent manner. Interacts with TESC. Interacts (via the C-terminal domain) with CHP1; the interaction occurs at the plasma membrane in a calcium-dependent manner and facilitates the maturation, cell surface expression, and function of SLC9A3. Interacts with CHP2; the interaction occurs in a calcium-dependent manner. Interacts with EZR; regulates the cytoskeletal interactions of SLC9A1 and promotes stress fiber formation. Post-translationally, O-glycosylated. In terms of processing, ubiquitinated, leading to its degradation by the proteasome. Ubiquitination is reduced by CHP1. Phosphorylation at Thr-779 increases SLC9A1 activity. Specifically dephosphorylated at Thr-779 by PPP3CA that negatively regulates SLC9A1 activity. Phosphorylation at Ser-648 by AKT1 reduces SLC9A1 binding to CALM1. Post-translationally, palmitoylated; may play a major role in SLC9A1 regulation. Kidney and intestine.

It localises to the cell membrane. It is found in the basolateral cell membrane. It carries out the reaction Na(+)(in) + H(+)(out) = Na(+)(out) + H(+)(in). It catalyses the reaction Li(+)(out) + H(+)(in) = Li(+)(in) + H(+)(out). The enzyme catalyses Li(+)(in) + Na(+)(out) = Li(+)(out) + Na(+)(in). Activated at acidic pHs. Inhibited by amiloride and 5-amino-substituted derivatives. Inhibited by cariporide and eniporide. Phosphatidylinositol 4,5-bisphosphate (PI(4,5)P2) and phosphatidylinositol 3,4,5-trisphosphate (PI(3,4,5)P3) bind and differentially regulate SLC9A1 activity. Electroneutral Na(+) /H(+) antiporter that extrudes Na(+) in exchange for external protons driven by the inward sodium ion chemical gradient, protecting cells from acidification that occurs from metabolism. Exchanges intracellular H(+) ions for extracellular Na(+) in 1:1 stoichiometry. Plays a key role in maintening intracellular pH neutral and cell volume, and thus is important for cell growth, proliferation, migration and survival. In addition, can transport lithium Li(+) and also functions as a Na(+)/Li(+) antiporter. SLC9A1 also functions in membrane anchoring and organization of scaffolding complexes that coordinate signaling inputs. This is Sodium/hydrogen exchanger 1 from Homo sapiens (Human).